The sequence spans 667 residues: Soluble guanylate cyclase 89Da (667 aa).

Residue H104 participates in heme binding. The interval 337–364 is disordered; sequence AQEFSESHPVDDDESAREDEIDPATGER. Residues 347–358 are compositionally biased toward acidic residues; the sequence is DDDESAREDEID. A coiled-coil region spans residues 427 to 455; it reads QHCSKLEIMFEKEEQRSDELEKSLELADS. Residues 491–617 form the Guanylate cyclase domain; it reads SVIFLEVMNV…DTVNTASRME (127 aa).

This sequence belongs to the adenylyl cyclase class-4/guanylyl cyclase family. In terms of assembly, heterodimer; with Gyc88E, in the presence of magnesium or manganese. Requires heme as cofactor.

The protein localises to the cytoplasm. It catalyses the reaction GTP = 3',5'-cyclic GMP + diphosphate. Probably not activated by nitric oxide (NO). Heterodimer also exhibits some stimulation, some compounds (SIN-1 and two of the NONOates) that were ineffective at stimulating Gyc-88E alone did stimulate the heterodimer. In terms of biological role, heterodimers with Gyc-89Da and Gyc-89Db are activated in response to changing oxygen concentrations, alerting flies to hypoxic environments. Under normal oxygen concentrations, oxygen binds to the heme group and results in low levels of guanylyl cyclase activity. When exposed to reduced oxygen concentrations, the oxygen dissociates from the heme group resulting in activation of the enzyme. This Drosophila melanogaster (Fruit fly) protein is Soluble guanylate cyclase 89Da.